Here is a 417-residue protein sequence, read N- to C-terminus: Brevican core protein (417 aa).

Residues 1–22 form the signal peptide; sequence MAPLFLPLLIALALAPGPTASA. The 133-residue stretch at 23-155 folds into the Ig-like V-type domain; sequence DVLEGDSSED…SSDAVEVKVK (133 aa). 3 cysteine pairs are disulfide-bonded: Cys57/Cys137, Cys179/Cys250, and Cys203/Cys224. A glycan (N-linked (GlcNAc...) asparagine) is linked at Asn130. Link domains follow at residues 157–252 and 257–354; these read VVFL…YCYA and GELF…YCFR. An N-linked (GlcNAc...) asparagine glycan is attached at Asn267. Disulfide bonds link Cys277/Cys352 and Cys301/Cys322. A glycan (N-linked (GlcNAc...) asparagine) is linked at Asn337.

It belongs to the aggrecan/versican proteoglycan family. Central nervous system.

Its subcellular location is the secreted. The protein resides in the extracellular space. It localises to the extracellular matrix. In terms of biological role, may play a role in the terminally differentiating and the adult nervous system during postnatal development. Could stabilize interactions between hyaluronan (HA) and brain proteoglycans. The chain is Brevican core protein (BCAN) from Felis catus (Cat).